Reading from the N-terminus, the 590-residue chain is Potassium-transporting ATPase potassium-binding subunit (590 aa).

The next 10 helical transmembrane spans lie at 11–31, 64–84, 136–156, 178–198, 273–293, 301–321, 403–423, 442–462, 511–531, and 552–572; these read IFIA…AAVF, TAYC…TYLI, GLAT…IAFI, ILWV…SQGV, MLEM…LGQM, WAVL…CYWA, AGLY…GLMV, AMLY…VAVL, LGFA…ALAG, and LFTV…FLPA.

This sequence belongs to the KdpA family. The system is composed of three essential subunits: KdpA, KdpB and KdpC.

It localises to the cell inner membrane. Its function is as follows. Part of the high-affinity ATP-driven potassium transport (or Kdp) system, which catalyzes the hydrolysis of ATP coupled with the electrogenic transport of potassium into the cytoplasm. This subunit binds the periplasmic potassium ions and delivers the ions to the membrane domain of KdpB through an intramembrane tunnel. This Acidobacterium capsulatum (strain ATCC 51196 / DSM 11244 / BCRC 80197 / JCM 7670 / NBRC 15755 / NCIMB 13165 / 161) protein is Potassium-transporting ATPase potassium-binding subunit.